The chain runs to 161 residues: Ribonuclease H (161 aa).

The 142-residue stretch at 3–144 folds into the RNase H type-1 domain; sequence VLKQLSIFTD…CDTLARVAAE (142 aa). Mg(2+)-binding residues include aspartate 12, glutamate 50, aspartate 72, and aspartate 136.

This sequence belongs to the RNase H family. As to quaternary structure, monomer. The cofactor is Mg(2+).

Its subcellular location is the cytoplasm. The catalysed reaction is Endonucleolytic cleavage to 5'-phosphomonoester.. Endonuclease that specifically degrades the RNA of RNA-DNA hybrids. This is Ribonuclease H from Shewanella woodyi (strain ATCC 51908 / MS32).